The following is a 317-amino-acid chain: tRNA-dihydrouridine(16) synthase (317 aa).

FMN-binding positions include 7-9 (PME) and glutamine 68. Catalysis depends on cysteine 98, which acts as the Proton donor. FMN is bound by residues lysine 139, 199-201 (NGE), and 223-224 (GR).

The protein belongs to the Dus family. DusC subfamily. Requires FMN as cofactor.

It catalyses the reaction 5,6-dihydrouridine(16) in tRNA + NADP(+) = uridine(16) in tRNA + NADPH + H(+). It carries out the reaction 5,6-dihydrouridine(16) in tRNA + NAD(+) = uridine(16) in tRNA + NADH + H(+). In terms of biological role, catalyzes the synthesis of 5,6-dihydrouridine (D), a modified base found in the D-loop of most tRNAs, via the reduction of the C5-C6 double bond in target uridines. Specifically modifies U16 in tRNAs. This is tRNA-dihydrouridine(16) synthase from Pseudomonas syringae pv. tomato (strain ATCC BAA-871 / DC3000).